Here is a 319-residue protein sequence, read N- to C-terminus: Thiamine-monophosphate kinase (319 aa).

Positions 28, 43, 44, and 45 each coordinate Mg(2+). Residue His52 coordinates substrate. Asp73 contributes to the Mg(2+) binding site. ATP contacts are provided by residues Tyr104, 121–122 (GD), and Arg145. Mg(2+) is bound at residue Asp122. Residue Asp218 participates in Mg(2+) binding. An ATP-binding site is contributed by Ser220. Asp221 is a binding site for Mg(2+). Residues Glu268 and Tyr315 each coordinate substrate.

This sequence belongs to the thiamine-monophosphate kinase family.

The enzyme catalyses thiamine phosphate + ATP = thiamine diphosphate + ADP. The protein operates within cofactor biosynthesis; thiamine diphosphate biosynthesis; thiamine diphosphate from thiamine phosphate: step 1/1. Its function is as follows. Catalyzes the ATP-dependent phosphorylation of thiamine-monophosphate (TMP) to form thiamine-pyrophosphate (TPP), the active form of vitamin B1. In Methanocaldococcus jannaschii (strain ATCC 43067 / DSM 2661 / JAL-1 / JCM 10045 / NBRC 100440) (Methanococcus jannaschii), this protein is Thiamine-monophosphate kinase.